We begin with the raw amino-acid sequence, 4083 residues long: Dynein heavy chain, cytoplasmic (4083 aa).

A stem region spans residues 1-1745 (MTDDQVAQAL…TIEQSCVSFC (1745 aa)). 3 coiled-coil regions span residues 127–166 (DAVV…FIEV), 381–402 (INQW…MRKR), and 801–821 (KLDL…VDQA). 4 AAA regions span residues 1746-1967 (YGFE…VLRN), 2026-2265 (SYLA…YKAD), 2373-2622 (SLES…WVRG), and 2716-2980 (TFAE…GNSQ). ATP is bound by residues 1784–1791 (GPAGTGKT), 2064–2071 (GDAGTGKT), 2412–2419 (GPPGSGKT), and 2754–2761 (GPNYSGKT). Positions 2987-3294 (LTSLRRFQSL…RSIKLMESLT (308 aa)) are stalk. 3 coiled-coil regions span residues 3015–3085 (LEKL…NERR), 3223–3302 (LKEE…RWIK), and 3527–3607 (LEKE…VEDL). AAA regions lie at residues 3364–3592 (MVNP…EIAK) and 3748–3952 (LKSL…FLDH).

This sequence belongs to the dynein heavy chain family. Consists of at least two heavy chains and a number of intermediate and light chains.

It is found in the cytoplasm. Its subcellular location is the cytoskeleton. In terms of biological role, cytoplasmic dynein acts as a motor for the intracellular retrograde motility of vesicles and organelles along microtubules. Dynein has ATPase activity; the force-producing power stroke is thought to occur on release of ADP. Required to maintain uniform nuclear distribution in hyphae. May play an important role in the proper orientation of the mitotic spindle into the budding daughter cell yeast. Probably required for normal progression of the cell cycle. The protein is Dynein heavy chain, cytoplasmic (DYN1) of Eremothecium gossypii (strain ATCC 10895 / CBS 109.51 / FGSC 9923 / NRRL Y-1056) (Yeast).